Here is a 258-residue protein sequence, read N- to C-terminus: Regulatory protein RecX (258 aa).

This sequence belongs to the RecX family.

The protein localises to the cytoplasm. Modulates RecA activity. This chain is Regulatory protein RecX, found in Streptococcus pneumoniae (strain P1031).